Consider the following 366-residue polypeptide: Nucleoporin SEH1 (366 aa).

WD repeat units follow at residues 18 to 57 (AHRD…NWRR), 63 to 104 (CHGG…TEKD), 111 to 152 (QWIR…RIYE), 161 to 209 (RWNL…VIYE), 226 to 267 (DMPC…TAIL), and 290 to 329 (GDQR…QWVK).

The protein belongs to the WD repeat SEC13 family. In terms of assembly, component of the nuclear pore complex (NPC). Probably part of the GATOR complex.

Its subcellular location is the nucleus. It localises to the nuclear pore complex. The protein resides in the lysosome membrane. Probable component of the nuclear pore complex (NPC) which is involved in the trafficking of macromolecules between the cytoplasm and nucleus. Functionally, as a component of the GATOR complex may function in the amino acid-sensing branch of the TORC1 signaling pathway. The polypeptide is Nucleoporin SEH1 (Caenorhabditis briggsae).